Reading from the N-terminus, the 884-residue chain is MAKIRIFELARSLNMTNPDLLDRLKEMGIEAKSHLSSLEDDIVEKVRQGVFRTEVEKPEKVEQKRVRSNVIRKRRQPVKSEAEPEAEAPAAQAPEAEEVTAPTAEEAVPEEAADADVSAKAETPTAPETPEEAEISVSEEAPVEEAADQVPPTDEAVDPAEAAPAEEESSPSRKKAKAKKHQAAKIIKFPDAPQRLSNKGVLEVVDDTAPADSPAAPAAATPAGEKDKKPSRKDRKKRGKTESVETEEAVPVKKKGVFKRKEIVEGVALYDRTRGRMRKKGKGGAKVPGGAKTQITTPKAIKRKVRINESISVAELAKRMGVKASEVIARLMGMGVMATLNQQVDFDSAALVAAEFEYEVEKASATEEELLELNVEEDQGNLKKRAPVVTIMGHVDHGKTSLLDVIRQSRITEGEAGGITQHIGAYKVNTANGEVVFLDTPGHEAFTAMRARGARATDIVILVVAADDGIMPQTIEAINHSRAAGVPIVVAVNKIDKEGADPDRVKREASDHGLVPEDWGGDTMFVNVSAKQKLGISDLLDMVLLQAEMLELKANPDKKARGVVIEAKLDPGRGPVATVLIHEGTLSVGETVVCGIHYGKIRAMFDDKGAPLDQAGPATPVELIGLGGVATSGDDLFAVGDEKSAKTVSENRQQKQRTEDLARKDSISLENFFEKMQEKEEKVLNIIIKADVNGSCEAIADSLQKFSSGEVKIHVVHSAPGTIIESDVTLASASNAIVLGFNVRPSPKVRALAAEENVDIRSYDIIYDLIDDIKKALTGMMSSTFEEEVLGRAEVRELFVIPKKGTIAGSYVLDGKIERGRPARLLRDGVIAYNGVIGSLRRHKDDAKEVASGYECGIGIENYNDIKPGDVIECYFLREIKPEL.

Positions 58–248 are disordered; the sequence is PEKVEQKRVR…GKTESVETEE (191 aa). Over residues 66 to 77 the composition is skewed to basic residues; sequence VRSNVIRKRRQP. The span at 87-106 shows a compositional bias: low complexity; that stretch reads EAPAAQAPEAEEVTAPTAEE. The segment covering 172-183 has biased composition (basic residues); that stretch reads SRKKAKAKKHQA. Over residues 207–223 the composition is skewed to low complexity; the sequence is DTAPADSPAAPAAATPA. Residues 229–239 show a composition bias toward basic residues; that stretch reads KPSRKDRKKRG. In terms of domain architecture, tr-type G spans 384–553; that stretch reads KRAPVVTIMG…LLQAEMLELK (170 aa). Positions 393–400 are G1; sequence GHVDHGKT. Position 393–400 (393–400) interacts with GTP; sequence GHVDHGKT. The interval 418-422 is G2; sequence GITQH. Residues 439 to 442 form a G3 region; that stretch reads DTPG. GTP contacts are provided by residues 439-443 and 493-496; these read DTPGH and NKID. Residues 493–496 form a G4 region; sequence NKID. Residues 529–531 form a G5 region; it reads SAK.

Belongs to the TRAFAC class translation factor GTPase superfamily. Classic translation factor GTPase family. IF-2 subfamily.

It localises to the cytoplasm. Functionally, one of the essential components for the initiation of protein synthesis. Protects formylmethionyl-tRNA from spontaneous hydrolysis and promotes its binding to the 30S ribosomal subunits. Also involved in the hydrolysis of GTP during the formation of the 70S ribosomal complex. This Desulfosudis oleivorans (strain DSM 6200 / JCM 39069 / Hxd3) (Desulfococcus oleovorans) protein is Translation initiation factor IF-2.